Consider the following 564-residue polypeptide: Rhodopsin kinase GRK1 (564 aa).

Positions 1 to 15 (MDFGSLETVVANSAF) are interaction with RCVRN. The tract at residues 1–189 (MDFGSLETVV…LEAQPIGEDW (189 aa)) is N-terminal. Serine 5 bears the Phosphoserine mark. Threonine 8 carries the post-translational modification Phosphothreonine. Serine 21 carries the post-translational modification Phosphoserine; by PKA and autocatalysis. In terms of domain architecture, RGS spans 58-175 (FDNLCSEQPI…LGSLYFLRFL (118 aa)). The region spanning 190 to 455 (FLDFRVLGKG…CDALRANVLF (266 aa)) is the Protein kinase domain. ATP contacts are provided by residues 196-204 (LGKGGFGEV) and lysine 219. The active-site Proton acceptor is aspartate 317. Residues 456–521 (KDISWRQLEA…GNCSIPWQEE (66 aa)) enclose the AGC-kinase C-terminal domain. Positions 456–564 (KDISWRQLEA…TAKSGMCLIS (109 aa)) are C-terminal. The residue at position 491 (serine 491) is a Phosphoserine; by autocatalysis. At threonine 492 the chain carries Phosphothreonine; by autocatalysis. Cysteine 561 is subject to Cysteine methyl ester. Cysteine 561 carries the S-farnesyl cysteine lipid modification. Residues 562 to 564 (LIS) constitute a propeptide, removed in mature form.

The protein belongs to the protein kinase superfamily. AGC Ser/Thr protein kinase family. GPRK subfamily. Interacts (via N-terminus) with RCVRN (via C-terminus); the interaction is Ca(2+)-dependent. Interacts (when prenylated) with PDE6D; this promotes release from membranes. May form a complex composed of RHO, GRK1 and RCVRN in a Ca(2+)-dependent manner; RCVRN prevents the interaction between GRK1 and RHO. Autophosphorylated, Ser-21 is a minor site of autophosphorylation compared to Ser-491 and Thr-492. Phosphorylation at Ser-21 is regulated by light and activated by cAMP. Post-translationally, farnesylation is required for full activity. Detected in retina (at protein level). Retina-specific. Expressed in rod and cone photoreceptor cells.

The protein localises to the membrane. Its subcellular location is the cell projection. The protein resides in the cilium. It is found in the photoreceptor outer segment. It catalyses the reaction L-threonyl-[rhodopsin] + ATP = O-phospho-L-threonyl-[rhodopsin] + ADP + H(+). It carries out the reaction L-seryl-[rhodopsin] + ATP = O-phospho-L-seryl-[rhodopsin] + ADP + H(+). Inhibited by RCVRN, which prevents the interaction between GRK1 and RHO. Inhibition is calcium-dependent. Functionally, retina-specific kinase involved in the signal turnoff via phosphorylation of rhodopsin (RHO), the G protein- coupled receptor that initiates the phototransduction cascade. This rapid desensitization is essential for scotopic vision and permits rapid adaptation to changes in illumination. May play a role in the maintenance of the outer nuclear layer in the retina. The sequence is that of Rhodopsin kinase GRK1 from Rattus norvegicus (Rat).